The chain runs to 376 residues: tRNA-specific 2-thiouridylase MnmA (376 aa).

Residues Gly-19 to Ser-26 and Met-45 each bind ATP. Residues Asn-105–Asp-107 form an interaction with target base in tRNA region. Cys-110 serves as the catalytic Nucleophile. Cys-110 and Cys-210 are oxidised to a cystine. Gly-134 provides a ligand contact to ATP. An interaction with tRNA region spans residues Lys-160 to Gln-162. Cys-210 (cysteine persulfide intermediate) is an active-site residue. Residues Arg-326–Tyr-327 are interaction with tRNA.

Belongs to the MnmA/TRMU family.

Its subcellular location is the cytoplasm. The catalysed reaction is S-sulfanyl-L-cysteinyl-[protein] + uridine(34) in tRNA + AH2 + ATP = 2-thiouridine(34) in tRNA + L-cysteinyl-[protein] + A + AMP + diphosphate + H(+). Its function is as follows. Catalyzes the 2-thiolation of uridine at the wobble position (U34) of tRNA, leading to the formation of s(2)U34. This is tRNA-specific 2-thiouridylase MnmA from Bordetella petrii (strain ATCC BAA-461 / DSM 12804 / CCUG 43448).